The following is a 217-amino-acid chain: Glutathione S-transferase B (217 aa).

The region spanning 1-87 (PMTLGYWNIR…YIARKHNLCG (87 aa)) is the GST N-terminal domain. Glutathione is bound by residues 6–7 (YW), 45–49 (WLNEK), 58–59 (NL), and 71–72 (QS). The 119-residue stretch at 89–207 (TEEETIRMDI…KSSRFLPKPL (119 aa)) folds into the GST C-terminal domain. Y115 contacts substrate.

This sequence belongs to the GST superfamily. Mu family. Homodimer.

It localises to the cytoplasm. It carries out the reaction RX + glutathione = an S-substituted glutathione + a halide anion + H(+). It catalyses the reaction prostaglandin A2 + glutathione = prostaglandin A2-S-(R)-glutathione. The catalysed reaction is prostaglandin J2 + glutathione = prostaglandin J2-S-(R)-glutathione. The enzyme catalyses prostaglandin J2 + glutathione = prostaglandin J2-S-(S)-glutathione. It carries out the reaction prostaglandin A2 + glutathione = prostaglandin A2-S-(S)-glutathione. It catalyses the reaction 11(S)-hydroxy-14(S),15(S)-epoxy-(5Z,8Z,12E)-eicosatrienoate + glutathione = (11S,15S)-dihydroxy-14(R)-S-glutathionyl-(5Z,8Z,12E)-eicosatrienoate. Conjugation of reduced glutathione to a wide number of exogenous and endogenous hydrophobic electrophiles. Involved in the formation of glutathione conjugates of both prostaglandin A2 (PGA2) and prostaglandin J2 (PGJ2). Participates in the formation of novel hepoxilin regioisomers. This is Glutathione S-transferase B (GSTM1) from Cavia porcellus (Guinea pig).